The chain runs to 107 residues: Iron-binding protein IscA (107 aa).

Fe cation contacts are provided by Cys-35, Cys-99, and Cys-101.

The protein belongs to the HesB/IscA family. Homodimer; may form tetramers and higher multimers. It depends on Fe cation as a cofactor.

Functionally, is able to transfer iron-sulfur clusters to apo-ferredoxin. Multiple cycles of [2Fe2S] cluster formation and transfer are observed, suggesting that IscA acts catalytically. Recruits intracellular free iron so as to provide iron for the assembly of transient iron-sulfur cluster in IscU in the presence of IscS, L-cysteine and the thioredoxin reductase system TrxA/TrxB. This chain is Iron-binding protein IscA, found in Cronobacter sakazakii (strain ATCC BAA-894) (Enterobacter sakazakii).